Consider the following 61-residue polypeptide: Large ribosomal subunit protein uL30 (61 aa).

Belongs to the universal ribosomal protein uL30 family. In terms of assembly, part of the 50S ribosomal subunit.

In Rhizorhabdus wittichii (strain DSM 6014 / CCUG 31198 / JCM 15750 / NBRC 105917 / EY 4224 / RW1) (Sphingomonas wittichii), this protein is Large ribosomal subunit protein uL30.